Here is a 118-residue protein sequence, read N- to C-terminus: MICOS complex subunit MIC13 (118 aa).

The Mitochondrial matrix segment spans residues 1–7; that stretch reads MVARVWS. The helical transmembrane segment at 8–26 threads the bilayer; sequence LMRFLIKGSVAGGAVYLVY. Residues 27-118 are Mitochondrial intermembrane-facing; that stretch reads DQELLGPSDK…GWEYVKARTK (92 aa).

This sequence belongs to the MICOS complex subunit Mic13 family. As to quaternary structure, component of the mitochondrial contact site and cristae organizing system (MICOS) complex, composed of at least MICOS10/MIC10, CHCHD3/MIC19, CHCHD6/MIC25, APOO/MIC26, MICOS13/MIC13, APOOL/MIC27 and IMMT/MIC60. The MICOS complex associates with mitochondrial outer membrane proteins SAMM50, MTX1 and MTX2 (together described as components of the mitochondrial outer membrane sorting assembly machinery (SAM) complex) and DNAJC11, mitochondrial inner membrane protein TMEM11 and with HSPA9. The MICOS and SAM complexes together with DNAJC11 are part of a large protein complex spanning both membranes termed the mitochondrial intermembrane space bridging (MIB) complex.

Its subcellular location is the mitochondrion inner membrane. In terms of biological role, component of the MICOS complex, a large protein complex of the mitochondrial inner membrane that plays crucial roles in the maintenance of crista junctions, inner membrane architecture, and formation of contact sites to the outer membrane. Constituent of mature MICOS complex, it is required for the formation of cristae junction (CJ) and maintenance of cristae morphology. Required for the incorporation of MICOS10/MIC10 into the MICOS complex. The chain is MICOS complex subunit MIC13 from Homo sapiens (Human).